Here is an 84-residue protein sequence, read N- to C-terminus: MNLFDFFRGRQKQTSASVAKERLQIIVAHERGQRSTPDYLPALQKELVEVIRKYVNIGNDDVQVALENQGSCSILELNITLPER.

Belongs to the MinE family.

Prevents the cell division inhibition by proteins MinC and MinD at internal division sites while permitting inhibition at polar sites. This ensures cell division at the proper site by restricting the formation of a division septum at the midpoint of the long axis of the cell. The protein is Cell division topological specificity factor of Pseudomonas entomophila (strain L48).